A 254-amino-acid polypeptide reads, in one-letter code: Ribonuclease PH (254 aa).

Phosphate is bound by residues Arg-90 and 128–130; that span reads GTR.

The protein belongs to the RNase PH family. Homohexameric ring arranged as a trimer of dimers.

It carries out the reaction tRNA(n+1) + phosphate = tRNA(n) + a ribonucleoside 5'-diphosphate. Functionally, phosphorolytic 3'-5' exoribonuclease that plays an important role in tRNA 3'-end maturation. Removes nucleotide residues following the 3'-CCA terminus of tRNAs; can also add nucleotides to the ends of RNA molecules by using nucleoside diphosphates as substrates, but this may not be physiologically important. Probably plays a role in initiation of 16S rRNA degradation (leading to ribosome degradation) during starvation. The chain is Ribonuclease PH from Corynebacterium kroppenstedtii (strain DSM 44385 / JCM 11950 / CIP 105744 / CCUG 35717).